We begin with the raw amino-acid sequence, 794 residues long: Lon protease (794 aa).

The region spanning V13–V204 is the Lon N-terminal domain. Residue G356–T363 participates in ATP binding. In terms of domain architecture, Lon proteolytic spans K592–P773. Residues S679 and K722 contribute to the active site. Low complexity predominate over residues T774–A788. Residues T774–Q794 are disordered.

It belongs to the peptidase S16 family. Homohexamer. Organized in a ring with a central cavity.

It is found in the cytoplasm. The enzyme catalyses Hydrolysis of proteins in presence of ATP.. In terms of biological role, ATP-dependent serine protease that mediates the selective degradation of mutant and abnormal proteins as well as certain short-lived regulatory proteins. Required for cellular homeostasis and for survival from DNA damage and developmental changes induced by stress. Degrades polypeptides processively to yield small peptide fragments that are 5 to 10 amino acids long. Binds to DNA in a double-stranded, site-specific manner. The protein is Lon protease of Citrifermentans bemidjiense (strain ATCC BAA-1014 / DSM 16622 / JCM 12645 / Bem) (Geobacter bemidjiensis).